We begin with the raw amino-acid sequence, 374 residues long: Flap endonuclease 1 (374 aa).

Positions 1–105 (MGIKGLTALI…ELLQKRFGRR (105 aa)) are N-domain. D34 provides a ligand contact to Mg(2+). Positions 47 and 71 each coordinate DNA. D87 serves as a coordination point for Mg(2+). Residues 103 to 122 (GRREEAREQEEEQKDVADAE) form a disordered region. The I-domain stretch occupies residues 123-254 (KMDQLARRQV…KTALKLIREH (132 aa)). The Mg(2+) site is built by E159, E161, D180, and D182. E159 is a DNA binding site. Residues G232 and D234 each contribute to the DNA site. Position 234 (D234) interacts with Mg(2+). The interval 335–374 (SLSQKQQGRLDGFFTVKPGSAPPKRKAEDDKKNVKKKGKK) is disordered. Residues 340-348 (QQGRLDGFF) are interaction with PCNA.

Belongs to the XPG/RAD2 endonuclease family. FEN1 subfamily. Interacts with PCNA. Three molecules of FEN1 bind to one PCNA trimer with each molecule binding to one PCNA monomer. PCNA stimulates the nuclease activity without altering cleavage specificity. Mg(2+) serves as cofactor. Phosphorylated. Phosphorylation upon DNA damage induces relocalization to the nuclear plasma.

It localises to the nucleus. It is found in the nucleolus. The protein localises to the nucleoplasm. Its subcellular location is the mitochondrion. Structure-specific nuclease with 5'-flap endonuclease and 5'-3' exonuclease activities involved in DNA replication and repair. During DNA replication, cleaves the 5'-overhanging flap structure that is generated by displacement synthesis when DNA polymerase encounters the 5'-end of a downstream Okazaki fragment. It enters the flap from the 5'-end and then tracks to cleave the flap base, leaving a nick for ligation. Also involved in the long patch base excision repair (LP-BER) pathway, by cleaving within the apurinic/apyrimidinic (AP) site-terminated flap. Acts as a genome stabilization factor that prevents flaps from equilibrating into structures that lead to duplications and deletions. Also possesses 5'-3' exonuclease activity on nicked or gapped double-stranded DNA, and exhibits RNase H activity. Also involved in replication and repair of rDNA and in repairing mitochondrial DNA. This chain is Flap endonuclease 1, found in Mycosarcoma maydis (Corn smut fungus).